A 350-amino-acid polypeptide reads, in one-letter code: Phosphoribosylformylglycinamidine cyclo-ligase (350 aa).

The protein belongs to the AIR synthase family.

It is found in the cytoplasm. It catalyses the reaction 2-formamido-N(1)-(5-O-phospho-beta-D-ribosyl)acetamidine + ATP = 5-amino-1-(5-phospho-beta-D-ribosyl)imidazole + ADP + phosphate + H(+). It functions in the pathway purine metabolism; IMP biosynthesis via de novo pathway; 5-amino-1-(5-phospho-D-ribosyl)imidazole from N(2)-formyl-N(1)-(5-phospho-D-ribosyl)glycinamide: step 2/2. The chain is Phosphoribosylformylglycinamidine cyclo-ligase from Cupriavidus pinatubonensis (strain JMP 134 / LMG 1197) (Cupriavidus necator (strain JMP 134)).